Here is a 233-residue protein sequence, read N- to C-terminus: Large ribosomal subunit protein uL1 (233 aa).

The protein belongs to the universal ribosomal protein uL1 family. As to quaternary structure, part of the 50S ribosomal subunit.

Its function is as follows. Binds directly to 23S rRNA. The L1 stalk is quite mobile in the ribosome, and is involved in E site tRNA release. Functionally, protein L1 is also a translational repressor protein, it controls the translation of the L11 operon by binding to its mRNA. This chain is Large ribosomal subunit protein uL1, found in Shewanella amazonensis (strain ATCC BAA-1098 / SB2B).